The following is a 338-amino-acid chain: Solute carrier family 35 member G5 (338 aa).

The segment at 1 to 27 (MAGSHPYFNLPDSTHPSPPSAPPSLRW) is disordered. Helical transmembrane passes span 37-57 (TNGL…VGPL), 67-87 (LPSL…ALLL), 102-122 (GWAC…YSAV), 160-180 (CGLL…LWTL), 190-210 (TLGY…LLVY), 221-241 (TVAF…LFVL), 250-270 (LLSW…FTCV), 281-301 (LVCA…YYML), and 305-325 (VALS…IITA). The EamA 1 domain occupies 49–174 (LPAGFVGPLS…SILGLIIILG (126 aa)). An EamA 2 domain is found at 272–325 (YAVTKAHPALVCAVLHSEVVVALILQYYMLHETVALSDIMGAGVVLGSIAIITA).

It belongs to the SLC35G solute transporter family. As to expression, expressed in placenta and testis.

It is found in the membrane. The sequence is that of Solute carrier family 35 member G5 (SLC35G5) from Homo sapiens (Human).